A 646-amino-acid polypeptide reads, in one-letter code: Acetyl-coenzyme A synthetase (646 aa).

Residues 189–192 (RGPK), T307, and N331 contribute to the CoA site. Residues 383-385 (GEP), 407-412 (DTWWQT), D496, and R511 each bind ATP. S519 provides a ligand contact to CoA. Residue R522 participates in ATP binding. Mg(2+) contacts are provided by V533, H535, and V538. R580 is a CoA binding site. K605 carries the N6-acetyllysine modification.

This sequence belongs to the ATP-dependent AMP-binding enzyme family. The cofactor is Mg(2+). Acetylated. Deacetylation by the SIR2-homolog deacetylase activates the enzyme.

It carries out the reaction acetate + ATP + CoA = acetyl-CoA + AMP + diphosphate. Functionally, catalyzes the conversion of acetate into acetyl-CoA (AcCoA), an essential intermediate at the junction of anabolic and catabolic pathways. AcsA undergoes a two-step reaction. In the first half reaction, AcsA combines acetate with ATP to form acetyl-adenylate (AcAMP) intermediate. In the second half reaction, it can then transfer the acetyl group from AcAMP to the sulfhydryl group of CoA, forming the product AcCoA. The protein is Acetyl-coenzyme A synthetase of Desulfatibacillum aliphaticivorans.